The chain runs to 1025 residues: Kinesin-like protein KIN-14P (1025 aa).

Disordered regions lie at residues 1–87 (MNPM…MHHG) and 263–286 (YSQI…NEEE). Over residues 15–28 (STPRSPFSPFSPLS) the composition is skewed to low complexity. Over residues 29-41 (VDDRHRNHADTKT) the composition is skewed to basic and acidic residues. Residues 42–53 (PRSPFSPFSPLS) show a composition bias toward low complexity. Polar residues predominate over residues 65-75 (KFQQALASSGQ). Positions 203–425 (HEIATQQLRQ…REMEKKSESN (223 aa)) form a coiled coil. A compositionally biased stretch (basic and acidic residues) spans 270-286 (TKTEKSKWEEQKKNEEE). Residues 509 to 838 (NIRVFCRVRP…LKFAERVSGV (330 aa)) enclose the Kinesin motor domain. Residue 593-600 (GQTGSGKT) participates in ATP binding. The stretch at 847–879 (KEGKDVRDLMEQLASLKDTIARKDEEIERLQHQ) forms a coiled coil. Disordered regions lie at residues 881–926 (QRLQ…SAEA), 939–977 (AASM…RPLD), and 994–1025 (TGLT…KRWA). Polar residues-rich tracts occupy residues 901–913 (SDTG…SRYS) and 939–948 (AASMGTQGSI). Over residues 950-962 (VTKRPPRISDRAK) the composition is skewed to basic and acidic residues. Composition is skewed to low complexity over residues 963-974 (SVTAKSSTSVTR) and 998-1016 (SSSK…STSS).

This sequence belongs to the TRAFAC class myosin-kinesin ATPase superfamily. Kinesin family. KIN-14 subfamily.

The chain is Kinesin-like protein KIN-14P from Arabidopsis thaliana (Mouse-ear cress).